A 461-amino-acid chain; its full sequence is Nuclear distribution protein PAC1 (461 aa).

The 33-residue stretch at 9–41 folds into the LisH domain; sequence QAEELHKAIIAYLSANNLSSSATALRTELGLAE. Positions 61-88 form a coiled coil; sequence TSVVRLQKKIMDLESRNNALQSELDNAT. 8 WD repeats span residues 114 to 155, 157 to 197, 201 to 248, 251 to 290, 295 to 355, 357 to 396, 401 to 444, and 446 to 461; these read SHQN…RTIK, HTRP…KNIR, GHDH…CLKT, GHTA…PENR, GHDH…LKTL, GHDN…KCVK, VHER…VRIR, and VIAT…IFAN.

Belongs to the WD repeat LIS1/nudF family. As to quaternary structure, self-associates. Interacts with NDL1 and dynein.

Its subcellular location is the cytoplasm. The protein resides in the cytoskeleton. The protein localises to the spindle pole. Its function is as follows. Positively regulates the activity of the minus-end directed microtubule motor protein dynein. May enhance dynein-mediated microtubule sliding by targeting dynein to the microtubule plus end. Required for nuclear migration during vegetative growth as well as development. Required for retrograde early endosome (EE) transport from the hyphal tip. Required for localization of dynein to the mitotic spindle poles. Recruits additional proteins to the dynein complex at SPBs. This Pyricularia oryzae (strain 70-15 / ATCC MYA-4617 / FGSC 8958) (Rice blast fungus) protein is Nuclear distribution protein PAC1.